A 279-amino-acid polypeptide reads, in one-letter code: uncharacterized protein (279 aa).

Positions 60 to 92 (RKANKLNNKQDSTFFNSASGETNNTILPPGVKN) are disordered. The span at 70-85 (DSTFFNSASGETNNTI) shows a compositional bias: polar residues. The next 3 helical transmembrane spans lie at 156 to 176 (IVGY…AVMN), 202 to 222 (ISIF…ILFL), and 237 to 257 (FIWI…LLMI).

It localises to the cell membrane. This is an uncharacterized protein from Mycoplasma genitalium (strain ATCC 33530 / DSM 19775 / NCTC 10195 / G37) (Mycoplasmoides genitalium).